The primary structure comprises 226 residues: Membrane protein (226 aa).

Residues 1–11 (MSNGSIPVDEV) lie on the Virion surface side of the membrane. Residues 12-32 (IEHLRNWNFTWNIILTILLVV) traverse the membrane as a helical segment. Residues 33–41 (LQYGHYKYS) lie on the Intravirion side of the membrane. A helical membrane pass occupies residues 42–62 (VFLYGVKMAILWILWPLVLAL). Residues 63-75 (SLFDAWASFQVNW) lie on the Virion surface side of the membrane. A helical transmembrane segment spans residues 76–96 (VFFAFSILMACITLMLWIMYF). The Intravirion segment spans residues 97–226 (VNSIRLWRRT…TDSEKVLHLV (130 aa)). Positions 200–216 (RSKHGDYSAVSNPSAVL) are interaction with N protein.

The protein belongs to the alphacoronaviruses M protein family. Homomultimer. Interacts with envelope E protein in the budding compartment of the host cell, which is located between endoplasmic reticulum and the Golgi complex. Forms a complex with HE and S proteins. Interacts with nucleocapsid N protein. This interaction probably participates in RNA packaging into the virus.

The protein resides in the virion membrane. It localises to the host Golgi apparatus membrane. Functionally, component of the viral envelope that plays a central role in virus morphogenesis and assembly via its interactions with other viral proteins. In Sus scrofa (Pig), this protein is Membrane protein.